The following is a 314-amino-acid chain: Coiled-coil domain-containing protein 42 like-2 (314 aa).

Coiled coils occupy residues 34–139 and 175–233; these read RLLE…RQEK and NKLL…WESR.

The protein belongs to the CFAP73 family.

The protein is Coiled-coil domain-containing protein 42 like-2 of Xenopus laevis (African clawed frog).